A 336-amino-acid polypeptide reads, in one-letter code: Di/tripeptide transport system permease protein DppB (336 aa).

Transmembrane regions (helical) follow at residues 10–30 (GLLI…IRLI), 102–122 (LSLA…VIAA), 145–165 (IFWW…WTPV), 198–218 (AVRH…AVIA), 257–277 (LIPV…GAVL), and 307–327 (ILLV…LYGL). The 230-residue stretch at 96-325 (FPATLELSLA…LVNFVVDILY (230 aa)) folds into the ABC transmembrane type-1 domain.

This sequence belongs to the binding-protein-dependent transport system permease family. OppBC subfamily. In terms of assembly, the complex is composed of two ATP-binding proteins (DppD and DppF), two transmembrane proteins (DppB and DppC) and a solute-binding protein (DppA1-A5). Five orthologous SBPs (DppA1-A5) are present in P.aeruginosa, which increases the substrate specificity of the DppBCDF transporter.

The protein resides in the cell inner membrane. Functionally, part of the ABC transporter DppABCDF involved in the uptake of various di/tripeptides. Is also involved in the uptake of phaseolotoxin, a toxic tripeptide inhibiting the enzyme ornithine carbamoyltransferase. Responsible for the translocation of the substrate across the membrane. This Pseudomonas aeruginosa (strain UCBPP-PA14) protein is Di/tripeptide transport system permease protein DppB.